We begin with the raw amino-acid sequence, 74 residues long: uncharacterized protein (74 aa).

Basic and acidic residues-rich tracts occupy residues 1–13 (MKKQ…HQLK) and 20–60 (IKAK…KSFE). The segment at 1-74 (MKKQKSIDKH…ESQMDWHQYK (74 aa)) is disordered. Positions 64 to 74 (NESQMDWHQYK) are enriched in polar residues.

This is an uncharacterized protein from Bacillus subtilis (strain 168).